A 586-amino-acid chain; its full sequence is Phosphomethylpyrimidine synthase (586 aa).

The segment at 1–59 (MKQSVSAEQIELKSSLPGSKKVYVDGPREGMKVPMREIEQSDTNGVPNPPIRVYDTSGP) is disordered. The segment covering 22–39 (VYVDGPREGMKVPMREIE) has biased composition (basic and acidic residues). Substrate-binding positions include N193, M222, Y251, H287, 307 to 309 (SRG), 348 to 351 (DGLR), and E387. H391 is a Zn(2+) binding site. Y414 lines the substrate pocket. A Zn(2+)-binding site is contributed by H455. [4Fe-4S] cluster-binding residues include C535, C538, and C543.

It belongs to the ThiC family. [4Fe-4S] cluster is required as a cofactor.

The catalysed reaction is 5-amino-1-(5-phospho-beta-D-ribosyl)imidazole + S-adenosyl-L-methionine = 4-amino-2-methyl-5-(phosphooxymethyl)pyrimidine + CO + 5'-deoxyadenosine + formate + L-methionine + 3 H(+). The protein operates within cofactor biosynthesis; thiamine diphosphate biosynthesis. Its function is as follows. Catalyzes the synthesis of the hydroxymethylpyrimidine phosphate (HMP-P) moiety of thiamine from aminoimidazole ribotide (AIR) in a radical S-adenosyl-L-methionine (SAM)-dependent reaction. This is Phosphomethylpyrimidine synthase from Bacillus cereus (strain Q1).